The following is a 197-amino-acid chain: Putative methyltransferase Mtx subunit A (197 aa).

Belongs to the MtrA family. May be part of a complex composed of 3 subunits; MtxA, MtxH and MtxX.

The polypeptide is Putative methyltransferase Mtx subunit A (mtxA) (Methanosarcina barkeri (strain Fusaro / DSM 804)).